Reading from the N-terminus, the 310-residue chain is GPN-loop GTPase 2 (310 aa).

Alanine 2 bears the N-acetylalanine mark. 19-24 (GSGKTT) lines the GTP pocket. The short motif at 76 to 78 (GPN) is the Gly-Pro-Asn (GPN)-loop; involved in dimer interface element. 178–181 (SKMD) contacts GTP.

This sequence belongs to the GPN-loop GTPase family. Heterodimers with GPN1 or GPN3. Binds to RNA polymerase II (RNAPII).

In terms of biological role, small GTPase required for proper localization of RNA polymerase II and III (RNAPII and RNAPIII). May act at an RNAP assembly step prior to nuclear import. The polypeptide is GPN-loop GTPase 2 (GPN2) (Bos taurus (Bovine)).